We begin with the raw amino-acid sequence, 210 residues long: Outer-membrane lipoprotein LolB (210 aa).

An N-terminal signal peptide occupies residues 1–26; that stretch reads MSKLKIDTKRRFSLLIALVLIISLSS. C27 carries the N-palmitoyl cysteine lipid modification. The S-diacylglycerol cysteine moiety is linked to residue C27.

Belongs to the LolB family. As to quaternary structure, monomer.

It is found in the cell outer membrane. Plays a critical role in the incorporation of lipoproteins in the outer membrane after they are released by the LolA protein. In Francisella tularensis subsp. novicida (strain U112), this protein is Outer-membrane lipoprotein LolB.